A 185-amino-acid chain; its full sequence is Vomeronasal secretory protein 2 (185 aa).

An N-terminal signal peptide occupies residues 1–19 (MKSLLLTVTLSSLVATLQT). Cysteines 80 and 172 form a disulfide.

The protein belongs to the calycin superfamily. Lipocalin family. In terms of tissue distribution, specifically expressed in vomeronasal and posterior glands of the nasal septum, the ducts of which open into the lumen of the vomeronasal organ.

It localises to the secreted. Transport of lipophilic molecules, possible pheromone-carrier. The protein is Vomeronasal secretory protein 2 (Lcn4) of Mus musculus (Mouse).